The chain runs to 441 residues: POC1 centriolar protein homolog A (441 aa).

WD repeat units lie at residues 16–55, 58–97, 100–139, 142–181, 184–223, 226–265, and 268–307; these read GHRDTVTTVDFNPNTKQLASGSMDSCLMIWNMKPQMRAYR, GHKDAILSVDFSPSGHLIASASRDKTVRLWVPSVKGESTV, AHTGTVRSVSFSGDGQSLVTASDDKTIKVWTVHRQKFLFS, QHINWVRCAKFSPDGRLIVSASDDKTIKLWDKTSRECIHS, EHGGFVNFVDFHPSGTCIAAAATDNTVKVWDIRMNKLIQH, VHSGVVNSLSFHPSGNYLITASNDSTLKVLDLLEGRLLYT, and GHQGPVTSVKFSREGEFFASGGSDEQVMVWKTNFDSASYA. The segment at 323-380 is disordered; sequence DYTSGVPAADRHRPERNAQTDQADDLEPRHIQMSAKDRSSPLSYTSRSIDQHHPQAED. Basic and acidic residues-rich tracts occupy residues 331-340, 348-361, and 371-380; these read ADRHRPERNA, LEPRHIQMSAKDRS, and IDQHHPQAED. Residues 400 to 427 adopt a coiled-coil conformation; sequence LTRTVGILEQRLSLTEDKLKECIDNQQA.

It belongs to the WD repeat POC1 family. As to quaternary structure, interacts with pat.

The protein resides in the cytoplasm. It is found in the cytoskeleton. Its function is as follows. May play an important role in centriole assembly and/or stability and ciliogenesis. This is POC1 centriolar protein homolog A (poc1a) from Xenopus tropicalis (Western clawed frog).